A 577-amino-acid chain; its full sequence is Moesin (577 aa).

The region spanning 2-295 (PKTISVRVTT…GNHELYMRRR (294 aa)) is the FERM domain. Phosphoserine is present on S74. The residue at position 79 (K79) is an N6-acetyllysine. K83 is subject to N6-succinyllysine. The [IL]-x-C-x-x-[DE] motif motif lies at 115–120 (IYCPPE). The residue at position 116 (Y116) is a Phosphotyrosine. The residue at position 117 (C117) is an S-nitrosocysteine. 2 positions are modified to N6-acetyllysine: K139 and K165. 3 disordered regions span residues 322-342 (LLEN…KIER), 358-453 (TKKA…QMVQ), and 468-549 (STPH…AENM). The segment covering 358-401 (TKKAQQELEEQTRRALELEQERKRAQSEAEKLAKERQEAEEAKE) has biased composition (basic and acidic residues). S407 bears the Phosphoserine mark. 2 stretches are compositionally biased toward basic and acidic residues: residues 438 to 447 (KESEAEECHQ) and 492 to 519 (AELR…ERVQ). S527 carries the post-translational modification Phosphoserine. The segment covering 531–549 (NARDESKKTTNDMIHAENM) has biased composition (basic and acidic residues). Position 558 is a phosphothreonine; by ROCK2 and STK10 (T558).

In terms of assembly, in resting T-cells, part of a PAG1-NHERF1-MSN complex which is disrupted upon TCR activation. Interacts with NHERF1. Interacts with PPP1R16B. Interacts with PDZD8. Interacts with SELPLG and SYK; these interactions mediate the activation of SYK by SELPLG. Interacts with PDPN (via cytoplasmic domain); this interaction activates RHOA and promotes epithelial-mesenchymal transition. Interacts with SPN/CD43 cytoplasmic tail. Interacts with CD44. Interacts with ICAM2. Interacts with ICAM3 (via C-terminus). Interacts with PDZD8. Interacts with F-actin. Interacts with CD46. Interacts with PTPN6. Phosphorylation on Thr-558 is crucial for the formation of microvilli-like structures. Phosphorylation by ROCK2 suppresses the head-to-tail association of the N-terminal and C-terminal halves resulting in an opened conformation which is capable of actin and membrane-binding. Phosphorylation on Thr-558 by STK10 negatively regulates lymphocyte migration and polarization. In terms of processing, S-nitrosylation of Cys-117 is induced by interferon-gamma and oxidatively-modified low-densitity lipoprotein (LDL(ox)) implicating the iNOS-S100A8/9 transnitrosylase complex.

The protein localises to the cell membrane. The protein resides in the cytoplasm. It localises to the cytoskeleton. Its subcellular location is the apical cell membrane. It is found in the cell projection. The protein localises to the microvillus membrane. The protein resides in the microvillus. With respect to regulation, a head-to-tail association, of the N-terminal and C-terminal halves results in a closed conformation (inactive form) which is incapable of actin or membrane-binding. Functionally, ezrin-radixin-moesin (ERM) family protein that connects the actin cytoskeleton to the plasma membrane and thereby regulates the structure and function of specific domains of the cell cortex. Tethers actin filaments by oscillating between a resting and an activated state providing transient interactions between moesin and the actin cytoskeleton. Once phosphorylated on its C-terminal threonine, moesin is activated leading to interaction with F-actin and cytoskeletal rearrangement. These rearrangements regulate many cellular processes, including cell shape determination, membrane transport, and signal transduction. The role of moesin is particularly important in immunity acting on both T and B-cells homeostasis and self-tolerance, regulating lymphocyte egress from lymphoid organs. Modulates phagolysosomal biogenesis in macrophages. Participates also in immunologic synapse formation. This chain is Moesin, found in Rattus norvegicus (Rat).